We begin with the raw amino-acid sequence, 154 residues long: MGLSDGEWELVLKTWGKVEADIPGHGEFVLVRLFTGHPETLEKFDKFKHLKTEGEMKASEDLKKQGVTVLTALGGILKKKGHHEAEIQPLAQSHATKHKIPIKYLEFISDAIIHVLQSKHPAEFGADAQAAMKKALELFRNDIAAKYKELGFQG.

The region spanning 2–148 is the Globin domain; sequence GLSDGEWELV…FRNDIAAKYK (147 aa). Ser4 is modified (phosphoserine). A Phosphothreonine modification is found at Thr68. His94 contributes to the heme b binding site.

It belongs to the globin family. In terms of assembly, monomeric.

It localises to the cytoplasm. It is found in the sarcoplasm. The enzyme catalyses Fe(III)-heme b-[protein] + nitric oxide + H2O = Fe(II)-heme b-[protein] + nitrite + 2 H(+). The catalysed reaction is H2O2 + AH2 = A + 2 H2O. Its function is as follows. Monomeric heme protein which primary function is to store oxygen and facilitate its diffusion within muscle tissues. Reversibly binds oxygen through a pentacoordinated heme iron and enables its timely and efficient release as needed during periods of heightened demand. Depending on the oxidative conditions of tissues and cells, and in addition to its ability to bind oxygen, it also has a nitrite reductase activity whereby it regulates the production of bioactive nitric oxide. Under stress conditions, like hypoxia and anoxia, it also protects cells against reactive oxygen species thanks to its pseudoperoxidase activity. The chain is Myoglobin (MB) from Loxodonta africana (African elephant).